A 438-amino-acid chain; its full sequence is Putative B3 domain-containing protein Os04g0676650 (438 aa).

Positions Met1 to Ser11 are enriched in low complexity. Disordered stretches follow at residues Met1 to Gly30 and Ser225 to Asn285. Residues Gly12 to Gly30 show a composition bias toward gly residues. Positions Arg258–Asp269 are enriched in basic and acidic residues. Over residues Asp272 to Asn285 the composition is skewed to polar residues. A DNA-binding region (TF-B3) is located at residues Leu302–Ile404.

It is found in the nucleus. The polypeptide is Putative B3 domain-containing protein Os04g0676650 (Oryza sativa subsp. japonica (Rice)).